A 178-amino-acid polypeptide reads, in one-letter code: Ribosome maturation factor RimM (178 aa).

The region spanning 100–178 (DEGEFYWHQL…EIRVDWDADF (79 aa)) is the PRC barrel domain.

It belongs to the RimM family. As to quaternary structure, binds ribosomal protein uS19.

It localises to the cytoplasm. Its function is as follows. An accessory protein needed during the final step in the assembly of 30S ribosomal subunit, possibly for assembly of the head region. Essential for efficient processing of 16S rRNA. May be needed both before and after RbfA during the maturation of 16S rRNA. It has affinity for free ribosomal 30S subunits but not for 70S ribosomes. This is Ribosome maturation factor RimM from Azotobacter vinelandii (strain DJ / ATCC BAA-1303).